A 132-amino-acid chain; its full sequence is uncharacterized protein (132 aa).

Residues 105 to 125 form a helical membrane-spanning segment; that stretch reads VHGYVVFWLSILCILIIIFVY.

The protein resides in the membrane. This is an uncharacterized protein from Methanocaldococcus jannaschii (strain ATCC 43067 / DSM 2661 / JAL-1 / JCM 10045 / NBRC 100440) (Methanococcus jannaschii).